Reading from the N-terminus, the 483-residue chain is Docking protein 1 (483 aa).

An N-acetylmethionine modification is found at methionine 1. The region spanning 4–119 (AVMEGPLFLQ…WVQTLCQNAF (116 aa)) is the PH domain. Serine 48 carries the phosphoserine modification. The 109-residue stretch at 151–259 (EGSQFWVTVQ…HRQKIQGKAG (109 aa)) folds into the IRS-type PTB domain. A phosphoserine mark is found at serine 269 and serine 291. Residues 293 to 326 (PALYSEPLDSLRIPPGPSQDSLYSDPLDSTPARA) form a disordered region. 6 positions are modified to phosphotyrosine: tyrosine 296, tyrosine 337, tyrosine 362, tyrosine 377, tyrosine 398, and tyrosine 409. The disordered stretch occupies residues 409-483 (YAVPPPRSTK…RTGAKSEGST (75 aa)). A compositionally biased stretch (pro residues) spans 411 to 424 (VPPPRSTKPFPAPK). Phosphoserine is present on serine 416. A compositionally biased stretch (polar residues) spans 434–460 (GAATGSGSQGHSSDTALYSQVQKSGAS). Tyrosine 451 is modified (phosphotyrosine). At serine 462 the chain carries Phosphoserine.

This sequence belongs to the DOK family. Type A subfamily. In terms of assembly, interacts with RasGAP, INPP5D/SHIP1 and ABL1. Interacts directly with phosphorylated ITGB3. Interacts with SRMS (via the SH2 and SH3 domains). Post-translationally, constitutively tyrosine-phosphorylated. Phosphorylated by TEC. Phosphorylated by LYN. Phosphorylated on tyrosine residues by the insulin receptor kinase. Results in the negative regulation of the insulin signaling pathway. Phosphorylated on tyrosine residues by SRMS.

It localises to the cytoplasm. Its subcellular location is the nucleus. Functionally, DOK proteins are enzymatically inert adaptor or scaffolding proteins. They provide a docking platform for the assembly of multimolecular signaling complexes. DOK1 appears to be a negative regulator of the insulin signaling pathway. Modulates integrin activation by competing with talin for the same binding site on ITGB3. This is Docking protein 1 (DOK1) from Bos taurus (Bovine).